A 234-amino-acid polypeptide reads, in one-letter code: Demethylmenaquinone methyltransferase (234 aa).

S-adenosyl-L-methionine-binding positions include Thr58, Asp79, and 106 to 107 (NA).

The protein belongs to the class I-like SAM-binding methyltransferase superfamily. MenG/UbiE family.

It catalyses the reaction a 2-demethylmenaquinol + S-adenosyl-L-methionine = a menaquinol + S-adenosyl-L-homocysteine + H(+). The protein operates within quinol/quinone metabolism; menaquinone biosynthesis; menaquinol from 1,4-dihydroxy-2-naphthoate: step 2/2. Methyltransferase required for the conversion of demethylmenaquinol (DMKH2) to menaquinol (MKH2). This Geobacillus stearothermophilus (Bacillus stearothermophilus) protein is Demethylmenaquinone methyltransferase.